The primary structure comprises 277 residues: MQQYHDALRTILECGEESTDRTGTGTISYFGMQMRYPLSDGFPLVTTKKLHLRSIFHELLWFLSGDTNIRYLQDNGVSIWDEWADENGDLGPVYGHQWRAFSALSPTEEVKDGEPLYLGRGVDQVTNLIDMIKSSPDSRRMIVSAWNPADVPRMALPPCHALWQVRVLNGRMHLQLYQRSADMFLGVPFNIASYSLLLVMLAHVTGYEPGDFVHTLGDAHIYSNHMDQVNLQLTRTPKPLPTLRINRQVSSIFDFRYEDFEVIGYDPDPAIRAPVAV.

Arg-21 is a dUMP binding site. His-51 serves as a coordination point for (6R)-5,10-methylene-5,6,7,8-tetrahydrofolate. 139-140 contributes to the dUMP binding site; the sequence is RR. The active-site Nucleophile is the Cys-159. DUMP contacts are provided by residues 179 to 182, Asn-190, and 220 to 222; these read RSAD and HIY. Asp-182 provides a ligand contact to (6R)-5,10-methylene-5,6,7,8-tetrahydrofolate. Ala-276 lines the (6R)-5,10-methylene-5,6,7,8-tetrahydrofolate pocket.

This sequence belongs to the thymidylate synthase family. Bacterial-type ThyA subfamily. Homodimer.

The protein resides in the cytoplasm. It carries out the reaction dUMP + (6R)-5,10-methylene-5,6,7,8-tetrahydrofolate = 7,8-dihydrofolate + dTMP. It functions in the pathway pyrimidine metabolism; dTTP biosynthesis. Functionally, catalyzes the reductive methylation of 2'-deoxyuridine-5'-monophosphate (dUMP) to 2'-deoxythymidine-5'-monophosphate (dTMP) while utilizing 5,10-methylenetetrahydrofolate (mTHF) as the methyl donor and reductant in the reaction, yielding dihydrofolate (DHF) as a by-product. This enzymatic reaction provides an intracellular de novo source of dTMP, an essential precursor for DNA biosynthesis. This Roseobacter denitrificans (strain ATCC 33942 / OCh 114) (Erythrobacter sp. (strain OCh 114)) protein is Thymidylate synthase.